Consider the following 349-residue polypeptide: Cobalt-precorrin-5B C(1)-methyltransferase (349 aa).

This sequence belongs to the CbiD family.

It carries out the reaction Co-precorrin-5B + S-adenosyl-L-methionine = Co-precorrin-6A + S-adenosyl-L-homocysteine. Its pathway is cofactor biosynthesis; adenosylcobalamin biosynthesis; cob(II)yrinate a,c-diamide from sirohydrochlorin (anaerobic route): step 6/10. Functionally, catalyzes the methylation of C-1 in cobalt-precorrin-5B to form cobalt-precorrin-6A. This chain is Cobalt-precorrin-5B C(1)-methyltransferase, found in Saccharolobus solfataricus (strain ATCC 35092 / DSM 1617 / JCM 11322 / P2) (Sulfolobus solfataricus).